The chain runs to 213 residues: Uracil phosphoribosyltransferase (213 aa).

Residues R78, R103, and 130–138 (DPMLATGGS) each bind 5-phospho-alpha-D-ribose 1-diphosphate. Residues I193 and 198-200 (GDA) each bind uracil. 5-phospho-alpha-D-ribose 1-diphosphate is bound at residue D199.

Belongs to the UPRTase family. The cofactor is Mg(2+).

It carries out the reaction UMP + diphosphate = 5-phospho-alpha-D-ribose 1-diphosphate + uracil. Its pathway is pyrimidine metabolism; UMP biosynthesis via salvage pathway; UMP from uracil: step 1/1. Its activity is regulated as follows. Allosterically activated by GTP. In terms of biological role, catalyzes the conversion of uracil and 5-phospho-alpha-D-ribose 1-diphosphate (PRPP) to UMP and diphosphate. This chain is Uracil phosphoribosyltransferase, found in Bordetella bronchiseptica (strain ATCC BAA-588 / NCTC 13252 / RB50) (Alcaligenes bronchisepticus).